The chain runs to 824 residues: Lysine-specific histone demethylase 1B homolog (824 aa).

Positions Met-1–Val-31 are disordered. The region spanning Pro-245–Pro-346 is the SWIRM domain. FAD contacts are provided by residues Pro-352–Ile-407, Val-579, Glu-788, and Gln-796–Met-798.

The protein belongs to the flavin monoamine oxidase family. It depends on FAD as a cofactor. In terms of tissue distribution, in hermaphrodites, expressed in gut cells, embryonic cells and sheath cells. Not expressed in sperm or pharyngeal neurons.

The protein localises to the nucleus. It carries out the reaction N(6),N(6)-dimethyl-L-lysyl(4)-[histone H3] + 2 A + 2 H2O = L-lysyl(4)-[histone H3] + 2 formaldehyde + 2 AH2. Its function is as follows. Histone demethylase that demethylates di-methylated 'Lys-4' of histone H3, a specific tag for epigenetic transcriptional activation, thereby acting as a corepressor. Acts by oxidizing the substrate by FAD to generate the corresponding imine that is subsequently hydrolyzed. Plays a role in the mitotic development of the germline. May be involved in H3 demethylation in mitotic cells including gut and embryonic cells. Plays a role in sensitivity upon interstrand cross-link DNA damage, probably by positively regulating the expression of mlh-1. Plays a role in developmental growth and lifespan regulation in response to ultraviolet-induced damage. No obvious role in larval development, sex chromosome segregation or for regulating meiotic crossover frequency. The protein is Lysine-specific histone demethylase 1B homolog of Caenorhabditis elegans.